A 240-amino-acid polypeptide reads, in one-letter code: 2,3,4,5-tetrahydropyridine-2,6-dicarboxylate N-acetyltransferase (240 aa).

The protein belongs to the transferase hexapeptide repeat family. DapH subfamily.

It catalyses the reaction (S)-2,3,4,5-tetrahydrodipicolinate + acetyl-CoA + H2O = L-2-acetamido-6-oxoheptanedioate + CoA. Its pathway is amino-acid biosynthesis; L-lysine biosynthesis via DAP pathway; LL-2,6-diaminopimelate from (S)-tetrahydrodipicolinate (acetylase route): step 1/3. Functionally, catalyzes the transfer of an acetyl group from acetyl-CoA to tetrahydrodipicolinate. In Bacillus cereus (strain G9842), this protein is 2,3,4,5-tetrahydropyridine-2,6-dicarboxylate N-acetyltransferase.